Consider the following 233-residue polypeptide: Small ribosomal subunit protein uS7m (233 aa).

The N-terminal 28 residues, 1–28, are a transit peptide targeting the mitochondrion; sequence MAAPTGKLLVHRIRAGLTCLTQVRWSRY.

The protein belongs to the universal ribosomal protein uS7 family. In terms of assembly, component of the mitochondrial ribosome small subunit (28S) which comprises a 12S rRNA and about 30 distinct proteins.

Its subcellular location is the mitochondrion. This chain is Small ribosomal subunit protein uS7m (mrps7), found in Xenopus laevis (African clawed frog).